We begin with the raw amino-acid sequence, 317 residues long: Protease 7 (317 aa).

An N-terminal signal peptide occupies residues 1 to 20 (MRAKLLGIVLTTPIAISSFA). The Periplasmic segment spans residues 21 to 31 (STETLSFTPDN). A beta stranded transmembrane segment spans residues 32–41 (INADISLGTL). Over 42 to 69 (SGKTKERVYLAEEGGRKVSQLDWKFNNA) the chain is Extracellular. A beta stranded transmembrane segment spans residues 70–78 (AIIKGAINW). The Periplasmic segment spans residues 79–83 (DLMPQ). The beta stranded transmembrane segment at 84–92 (ISIGAAGWT) threads the bilayer. Over 93–130 (TLGSRGGNMVDQDWMDSSNPGTWTDESRHPDTQLNYAN) the chain is Extracellular. Catalysis depends on residues Asp-103 and Asp-105. The beta stranded transmembrane segment at 131 to 140 (EFDLNIKGWL) threads the bilayer. Residues 141–145 (LNEPN) lie on the Periplasmic side of the membrane. The chain crosses the membrane as a beta stranded span at residues 146–156 (YRLGLMAGYQE). Residues 157–197 (SRYSFTARGGSYIYSSEEGFRDDIGSFPNGERAIGYKQRFK) lie on the Extracellular side of the membrane. The beta stranded transmembrane segment at 198–209 (MPYIGLTGSYRY) threads the bilayer. Residues 210–211 (ED) are Periplasmic-facing. Residues 212 to 221 (FELGGTFKYS) traverse the membrane as a beta stranded segment. Residues 222–250 (GWVESSDNDEHYDPGKRITYRSKVKDQNY) are Extracellular-facing. Residues Asp-230 and His-232 contribute to the active site. Residues 251-261 (YSVAVNAGYYV) form a beta stranded membrane-spanning segment. Over 262–264 (TPN) the chain is Periplasmic. The beta stranded transmembrane segment at 265 to 274 (AKVYVEGAWN) threads the bilayer. Over 275 to 306 (RVTNKKGNTSLYDHNNNTSDYSKNGAGIENYN) the chain is Extracellular. A beta stranded transmembrane segment spans residues 307–316 (FITTAGLKYT). Phe-317 is a topological domain (periplasmic).

It belongs to the peptidase A26 family. Homopentamer.

The protein localises to the cell outer membrane. The catalysed reaction is Has a virtual requirement for Arg in the P1 position and a slightly less stringent preference for this residue in the P1' position, which can also contain Lys, Gly or Val.. Its activity is regulated as follows. Inhibited by zinc. Protease that can cleave T7 RNA polymerase, ferric enterobactin receptor protein (FEP), antimicrobial peptide protamine and other proteins. This protease has a specificity for paired basic residues. The chain is Protease 7 (ompT) from Escherichia coli (strain K12).